Consider the following 351-residue polypeptide: Protein-glutamate methylesterase/protein-glutamine glutaminase 2 (351 aa).

Residues 4–121 (KVLVVDDSAL…PQDFNEYQDL (118 aa)) enclose the Response regulatory domain. Asp55 carries the post-translational modification 4-aspartylphosphate. Residues 156–348 (RVINTQLVAI…DKMLNYLASL (193 aa)) enclose the CheB-type methylesterase domain. Residues Ser168, His194, and Asp290 contribute to the active site.

Belongs to the CheB family. In terms of processing, phosphorylated by CheA. Phosphorylation of the N-terminal regulatory domain activates the methylesterase activity.

Its subcellular location is the cytoplasm. The catalysed reaction is [protein]-L-glutamate 5-O-methyl ester + H2O = L-glutamyl-[protein] + methanol + H(+). It carries out the reaction L-glutaminyl-[protein] + H2O = L-glutamyl-[protein] + NH4(+). Its function is as follows. Involved in chemotaxis. Part of a chemotaxis signal transduction system that modulates chemotaxis in response to various stimuli. Catalyzes the demethylation of specific methylglutamate residues introduced into the chemoreceptors (methyl-accepting chemotaxis proteins or MCP) by CheR. Also mediates the irreversible deamidation of specific glutamine residues to glutamic acid. In Shewanella sp. (strain MR-7), this protein is Protein-glutamate methylesterase/protein-glutamine glutaminase 2.